A 1161-amino-acid chain; its full sequence is Hamartin (1161 aa).

Residue K30 forms a Glycyl lysine isopeptide (Lys-Gly) (interchain with G-Cter in ubiquitin) linkage. Disordered stretches follow at residues 296 to 336 (PYVD…PSTR) and 353 to 591 (CGMT…QRGV). Positions 303–336 (SYGGSTSTPSSSSRLMLFSPPGQLPQSLSSPSTR) are enriched in low complexity. Positions 393–402 (TSPPPAPPCP) are enriched in pro residues. The interval 403-784 (QDDCVHGSAA…QIRQLQHDRE (382 aa)) is mediates interaction with WDR45B. Residues 471–484 (EKDKEEAAISKELS) are compositionally biased toward basic and acidic residues. A phosphoserine mark is found at S484, S502, S508, S518, S592, and S595. Polar residues predominate over residues 509–529 (LSGSQRKTHSAASGTQGSSVN). 3 coiled-coil regions span residues 721–849 (IRAA…NRQL), 879–917 (TAYRKELEKNRSHLLQQNQRLDASQRRVLELESLLAKKD), and 967–991 (EKDGRLRKLEEDRAEAAEAAEERLD). 2 disordered regions span residues 1003 to 1077 (GHNE…SLPS) and 1092 to 1161 (NKSE…PEHS). Positions 1004–1017 (HNEEASGHNGETRT) are enriched in basic and acidic residues. Low complexity predominate over residues 1026–1043 (SCGGRVTGGSSSSSSELS). The segment covering 1064 to 1077 (PSSSIPTTVGSLPS) has biased composition (polar residues). S1094 carries the post-translational modification Phosphoserine. Positions 1103-1113 (VTMSSSSLSET) are enriched in low complexity. Composition is skewed to basic and acidic residues over residues 1114–1124 (LKTELGKDSGT) and 1152–1161 (DYNETHPEHS).

As to quaternary structure, component of the TSC-TBC complex (also named Rhebulator complex), composed of 2 molecules of TSC1, 2 molecules of TSC2 and 1 molecule of TBC1D7. Probably forms a complex composed of chaperones HSP90 and HSP70, co-chaperones STIP1/HOP, CDC37, PPP5C, PTGES3/p23, TSC1 and client protein TSC2. Forms a complex composed of chaperones HSP90 and HSP70, co-chaperones CDC37, PPP5C, TSC1 and client protein TSC2, CDK4, AKT, RAF1 and NR3C1; this complex does not contain co-chaperones STIP1/HOP and PTGES3/p23. Forms a complex containing HSP90AA1, TSC1 and TSC2; TSC1 is required to recruit TCS2 to the complex. Interacts (via C-terminus) with the closed form of HSP90AA1 (via the middle domain and TPR repeat-binding motif). Interacts with DOCK7. Interacts with FBXW5. Interacts with WDR45B. Interacts with RPAP3 and URI1. In terms of processing, phosphorylation at Ser-502 does not affect interaction with TSC2. 'Lys-63'-linked ubiquitinated at Lys-30 by PELI1; the ubiquitination promotes TSC1/TSC2 complex stability.

It is found in the lysosome membrane. The protein resides in the cytoplasm. Its subcellular location is the cytosol. Functionally, non-catalytic component of the TSC-TBC complex, a multiprotein complex that acts as a negative regulator of the canonical mTORC1 complex, an evolutionarily conserved central nutrient sensor that stimulates anabolic reactions and macromolecule biosynthesis to promote cellular biomass generation and growth. The TSC-TBC complex acts as a GTPase-activating protein (GAP) for the small GTPase RHEB, a direct activator of the protein kinase activity of mTORC1. In absence of nutrients, the TSC-TBC complex inhibits mTORC1, thereby preventing phosphorylation of ribosomal protein S6 kinase (RPS6KB1 and RPS6KB2) and EIF4EBP1 (4E-BP1) by the mTORC1 signaling. The TSC-TBC complex is inactivated in response to nutrients, relieving inhibition of mTORC1. Within the TSC-TBC complex, TSC1 stabilizes TSC2 and prevents TSC2 self-aggregation. Involved in microtubule-mediated protein transport via its ability to regulate mTORC1 signaling. Also acts as a co-chaperone for HSP90AA1 facilitating HSP90AA1 chaperoning of protein clients such as kinases, TSC2 and glucocorticoid receptor NR3C1. Increases ATP binding to HSP90AA1 and inhibits HSP90AA1 ATPase activity. Competes with the activating co-chaperone AHSA1 for binding to HSP90AA1, thereby providing a reciprocal regulatory mechanism for chaperoning of client proteins. Recruits TSC2 to HSP90AA1 and stabilizes TSC2 by preventing the interaction between TSC2 and ubiquitin ligase HERC1. The sequence is that of Hamartin from Mus musculus (Mouse).